We begin with the raw amino-acid sequence, 155 residues long: Transcriptional repressor NrdR (155 aa).

The segment at 3–34 is a zinc-finger region; it reads CPFCGNIDTQVKDSRPAEDHVSIRRRRFCPAC. The 91-residue stretch at 49-139 folds into the ATP-cone domain; it reads LVVIKSSGKR…VYKNFQAADD (91 aa).

This sequence belongs to the NrdR family. The cofactor is Zn(2+).

Its function is as follows. Negatively regulates transcription of bacterial ribonucleotide reductase nrd genes and operons by binding to NrdR-boxes. In Cereibacter sphaeroides (strain ATCC 17025 / ATH 2.4.3) (Rhodobacter sphaeroides), this protein is Transcriptional repressor NrdR.